Here is a 541-residue protein sequence, read N- to C-terminus: Neutral amino acid transporter B(0) (541 aa).

Met1 bears the N-acetylmethionine mark. Residues 1-10 are compositionally biased toward basic and acidic residues; sequence MVADPPKGDP. Residues 1–32 form a disordered region; the sequence is MVADPPKGDPKGLAAVEPTANGAPAQDPLEDS. The Cytoplasmic portion of the chain corresponds to 1–52; the sequence is MVADPPKGDPKGLAAVEPTANGAPAQDPLEDSGAAVGRCCSSRDQVRRCLRA. The helical transmembrane segment at 53–82 threads the bilayer; the sequence is NLLVLLTVVAVVAGVALGLAVSGAGGALAL. At 83 to 95 the chain is on the extracellular side; that stretch reads GPARLIAFAFPGE. Residues 96–117 traverse the membrane as a helical segment; sequence LLLRLLKMIILPLVVCSLVGGA. Over 118–131 the chain is Cytoplasmic; sequence ASLDPSALGRLGAW. Residues 132 to 154 traverse the membrane as a helical segment; sequence ALLFFLVTTLLASALGVGLALAL. Residues 155–225 lie on the Extracellular side of the membrane; sequence QPGAAFAAMN…GTLVKVPVAH (71 aa). 2 N-linked (GlcNAc...) asparagine glycosylation sites follow: Asn164 and Asn215. Residues 226–249 traverse the membrane as a helical segment; sequence EEEGMNILGLVVFAIVFGVALRKL. Residues 250 to 258 lie on the Cytoplasmic side of the membrane; sequence GPEGEPLIR. Residues 259–286 form a helical membrane-spanning segment; the sequence is FFNSFNDATMVLVSWIMWYAPVGILFLV. Topologically, residues 287–307 are extracellular; it reads ASKIVEMDDVGVLFASLGKYI. Residues 308–329 traverse the membrane as a helical segment; the sequence is LCCLLGHAIHGLLVLPLIYFLF. Residues 330–334 lie on the Cytoplasmic side of the membrane; the sequence is TRKNP. The segment at residues 335 to 365 is an intramembrane region (discontinuously helical); it reads YRFLWGILTPLAMAFGTSSSSATLPLMMKCV. The Cytoplasmic segment spans residues 366–374; that stretch reads EERNGVAKH. A helical transmembrane segment spans residues 375-401; it reads ISRFVLPIGATVNMDGAALFQCVAAVF. Residues Gly383, Thr385, and Asn387 each coordinate Na(+). At 402-414 the chain is on the extracellular side; that stretch reads IAQLNRQSLDFVK. The discontinuously helical intramembrane region spans 415 to 448; it reads IITILVTATASSVGAAGIPAGGVLTLAIILEAVS. Over 449-461 the chain is Extracellular; the sequence is LPVSEISLILAVD. The chain crosses the membrane as a helical span at residues 462–483; that stretch reads WLVDRSCTIINVEGDAFGAGLL. The Na(+) site is built by Asn472 and Asp476. At 484–541 the chain is on the cytoplasmic side; sequence QHYVDRTEQRGSEPELTQVKSEVPLGSLPAPNEEGNPLLRHSPGAAGDAGACEKESVM. The tract at residues 493–541 is disordered; the sequence is RGSEPELTQVKSEVPLGSLPAPNEEGNPLLRHSPGAAGDAGACEKESVM. Phosphoserine occurs at positions 495, 504, and 539.

This sequence belongs to the dicarboxylate/amino acid:cation symporter (DAACS) (TC 2.A.23) family. SLC1A5 subfamily. As to quaternary structure, homotrimer.

It is found in the cell membrane. Its subcellular location is the melanosome. It catalyses the reaction L-glutamine(out) + L-serine(in) + Na(+)(out) = L-glutamine(in) + L-serine(out) + Na(+)(in). It carries out the reaction L-glutamine(in) + L-serine(out) + Na(+)(out) = L-glutamine(out) + L-serine(in) + Na(+)(in). The catalysed reaction is L-threonine(in) + L-glutamine(out) + Na(+)(out) = L-threonine(out) + L-glutamine(in) + Na(+)(in). The enzyme catalyses L-threonine(out) + L-glutamine(in) + Na(+)(out) = L-threonine(in) + L-glutamine(out) + Na(+)(in). It catalyses the reaction L-asparagine(in) + L-glutamine(out) + Na(+)(out) = L-asparagine(out) + L-glutamine(in) + Na(+)(in). It carries out the reaction L-asparagine(out) + L-glutamine(in) + Na(+)(out) = L-asparagine(in) + L-glutamine(out) + Na(+)(in). The catalysed reaction is L-glutamine(in) + L-alanine(out) + Na(+)(out) = L-glutamine(out) + L-alanine(in) + Na(+)(in). The enzyme catalyses L-valine(out) + L-glutamine(in) + Na(+)(out) = L-valine(in) + L-glutamine(out) + Na(+)(in). It catalyses the reaction L-glutamine(in) + L-methionine(out) + Na(+)(out) = L-glutamine(out) + L-methionine(in) + Na(+)(in). It carries out the reaction L-glutamine(in) + L-glutamate(out) + Na(+)(out) + H(+)(out) = L-glutamine(out) + L-glutamate(in) + Na(+)(in) + H(+)(in). The catalysed reaction is D-serine(in) + L-glutamine(out) + Na(+)(out) = D-serine(out) + L-glutamine(in) + Na(+)(in). The enzyme catalyses D-serine(in) + L-alanine(out) + Na(+)(out) = D-serine(out) + L-alanine(in) + Na(+)(in). It catalyses the reaction nitrate(in) = nitrate(out). It carries out the reaction iodide(out) = iodide(in). The catalysed reaction is thiocyanate(in) = thiocyanate(out). In terms of biological role, sodium-coupled antiporter of neutral amino acids. In a tri-substrate transport cycle, exchanges neutral amino acids between the extracellular and intracellular compartments, coupled to the inward cotransport of at least one sodium ion. The preferred substrate is the essential amino acid L-glutamine, a precursor for biosynthesis of proteins, nucleotides and amine sugars as well as an alternative fuel for mitochondrial oxidative phosphorylation. Exchanges L-glutamine with other neutral amino acids such as L-serine, L-threonine and L-asparagine in a bidirectional way. Provides L-glutamine to proliferating stem and activated cells driving the metabolic switch toward cell differentiation. The transport cycle is usually pH-independent, with the exception of L-glutamate. Transports extracellular L-glutamate coupled to the cotransport of one proton and one sodium ion in exchange for intracellular L-glutamine counter-ion. May provide for L-glutamate uptake in glial cells regulating glutamine/glutamate cycle in the nervous system. Can transport D-amino acids. Mediates D-serine release from the retinal glia potentially affecting NMDA receptor function in retinal neurons. Displays sodium- and amino acid-dependent but uncoupled channel-like anion conductance with a preference SCN(-) &gt;&gt; NO3(-) &gt; I(-) &gt; Cl(-). Through binding of the fusogenic protein syncytin-1/ERVW-1 may mediate trophoblasts syncytialization, the spontaneous fusion of their plasma membranes, an essential process in placental development. This is Neutral amino acid transporter B(0) (SLC1A5) from Oryctolagus cuniculus (Rabbit).